The chain runs to 461 residues: tRNA modification GTPase MnmE (461 aa).

Positions 23, 88, and 127 each coordinate (6S)-5-formyl-5,6,7,8-tetrahydrofolate. A TrmE-type G domain is found at 223–383; the sequence is GLNTVIVGKP…LKECIKNLFF (161 aa). Residue N233 coordinates K(+). GTP contacts are provided by residues 233-238, 252-258, and 277-280; these read NVGKSS, TEIPGTT, and DTAG. Mg(2+) is bound at residue S237. K(+)-binding residues include T252, I254, and T257. T258 is a binding site for Mg(2+). K461 is a binding site for (6S)-5-formyl-5,6,7,8-tetrahydrofolate.

The protein belongs to the TRAFAC class TrmE-Era-EngA-EngB-Septin-like GTPase superfamily. TrmE GTPase family. As to quaternary structure, homodimer. Heterotetramer of two MnmE and two MnmG subunits. The cofactor is K(+).

The protein localises to the cytoplasm. Its function is as follows. Exhibits a very high intrinsic GTPase hydrolysis rate. Involved in the addition of a carboxymethylaminomethyl (cmnm) group at the wobble position (U34) of certain tRNAs, forming tRNA-cmnm(5)s(2)U34. This Clostridium botulinum (strain Okra / Type B1) protein is tRNA modification GTPase MnmE.